We begin with the raw amino-acid sequence, 95 residues long: Small ribosomal subunit protein bS6 (95 aa).

Belongs to the bacterial ribosomal protein bS6 family.

In terms of biological role, binds together with bS18 to 16S ribosomal RNA. The sequence is that of Small ribosomal subunit protein bS6 from Caldanaerobacter subterraneus subsp. tengcongensis (strain DSM 15242 / JCM 11007 / NBRC 100824 / MB4) (Thermoanaerobacter tengcongensis).